The sequence spans 432 residues: Glutamyl-tRNA reductase (432 aa).

Residues 49 to 52 (TCNR), S107, 112 to 114 (ETQ), and Q118 each bind substrate. The active-site Nucleophile is the C50. 186-191 (GAGEMG) is a binding site for NADP(+).

This sequence belongs to the glutamyl-tRNA reductase family. Homodimer.

It carries out the reaction (S)-4-amino-5-oxopentanoate + tRNA(Glu) + NADP(+) = L-glutamyl-tRNA(Glu) + NADPH + H(+). It participates in porphyrin-containing compound metabolism; protoporphyrin-IX biosynthesis; 5-aminolevulinate from L-glutamyl-tRNA(Glu): step 1/2. Its function is as follows. Catalyzes the NADPH-dependent reduction of glutamyl-tRNA(Glu) to glutamate 1-semialdehyde (GSA). This is Glutamyl-tRNA reductase from Campylobacter jejuni subsp. doylei (strain ATCC BAA-1458 / RM4099 / 269.97).